The sequence spans 376 residues: Formate dehydrogenase 1 (376 aa).

Substrate-binding residues include V97 and N121. NAD(+) is bound by residues 176–177, D197, 244–248, T270, D296, and 325–328; these read RI, PLHKD, and HISG.

Belongs to the D-isomer specific 2-hydroxyacid dehydrogenase family. FDH subfamily. Homodimer.

The protein localises to the cytoplasm. It catalyses the reaction formate + NAD(+) = CO2 + NADH. Functionally, catalyzes the NAD(+)-dependent oxidation of formate to carbon dioxide. Formate oxidation is the final step in the methanol oxidation pathway in methylotrophic microorganisms. Has a role in the detoxification of exogenous formate in non-methylotrophic organisms. The polypeptide is Formate dehydrogenase 1 (FDH1) (Saccharomyces cerevisiae (strain YJM789) (Baker's yeast)).